The primary structure comprises 571 residues: Septation ring formation regulator EzrA (571 aa).

The Extracellular portion of the chain corresponds to 1–3; it reads MYY. The helical transmembrane segment at 4–22 threads the bilayer; that stretch reads MLIGFIIVVIAIISAGYIL. Residues 23 to 571 lie on the Cytoplasmic side of the membrane; the sequence is KRKHYQRINE…ESKVSVDDIE (549 aa). Coiled-coil stretches lie at residues 169–214, 249–298, 326–374, 400–438, and 474–529; these read VETK…AQME, AQME…DTLE, DALA…ASGE, KFAEELRSLRKDELEARDDAERMRRAIVTLDRKMERERL, and TQDW…ENHF.

This sequence belongs to the EzrA family.

It localises to the cell membrane. Functionally, negative regulator of FtsZ ring formation; modulates the frequency and position of FtsZ ring formation. Inhibits FtsZ ring formation at polar sites. Interacts either with FtsZ or with one of its binding partners to promote depolymerization. The protein is Septation ring formation regulator EzrA of Listeria welshimeri serovar 6b (strain ATCC 35897 / DSM 20650 / CCUG 15529 / CIP 8149 / NCTC 11857 / SLCC 5334 / V8).